Reading from the N-terminus, the 106-residue chain is Phosphoribosyl-ATP pyrophosphatase (106 aa).

This sequence belongs to the PRA-PH family.

Its subcellular location is the cytoplasm. It carries out the reaction 1-(5-phospho-beta-D-ribosyl)-ATP + H2O = 1-(5-phospho-beta-D-ribosyl)-5'-AMP + diphosphate + H(+). It functions in the pathway amino-acid biosynthesis; L-histidine biosynthesis; L-histidine from 5-phospho-alpha-D-ribose 1-diphosphate: step 2/9. This chain is Phosphoribosyl-ATP pyrophosphatase, found in Methylobacillus flagellatus (strain ATCC 51484 / DSM 6875 / VKM B-1610 / KT).